Consider the following 643-residue polypeptide: RNA-binding protein RO60 (643 aa).

Residues 63-473 (VENNAGGFVF…AFVNAPPTGK (411 aa)) form the TROVE domain. The tract at residues 186 to 390 (RTPTHLFEFV…SMPMTAMIRN (205 aa)) is RNA-binding. Residues 465–643 (FVNAPPTGKR…IVHEFVTGKI (179 aa)) are VWFA-like domain. A divalent metal cation contacts are provided by serine 482, serine 484, and threonine 549.

The protein belongs to the Ro 60 kDa family.

It is found in the cytoplasm. In terms of biological role, RNA-binding protein that binds to misfolded non-coding RNAs, pre-5S rRNA, and several small cytoplasmic RNA molecules known as Y RNAs. The sequence is that of RNA-binding protein RO60 from Caenorhabditis elegans.